The chain runs to 315 residues: tRNA dimethylallyltransferase (315 aa).

13-20 (GPTASGKS) contributes to the ATP binding site. 15-20 (TASGKS) serves as a coordination point for substrate. 2 interaction with substrate tRNA regions span residues 38–41 (DSMQ) and 162–166 (QRLAR).

It belongs to the IPP transferase family. As to quaternary structure, monomer. The cofactor is Mg(2+).

The catalysed reaction is adenosine(37) in tRNA + dimethylallyl diphosphate = N(6)-dimethylallyladenosine(37) in tRNA + diphosphate. Its function is as follows. Catalyzes the transfer of a dimethylallyl group onto the adenine at position 37 in tRNAs that read codons beginning with uridine, leading to the formation of N6-(dimethylallyl)adenosine (i(6)A). The sequence is that of tRNA dimethylallyltransferase from Paramagnetospirillum magneticum (strain ATCC 700264 / AMB-1) (Magnetospirillum magneticum).